A 211-amino-acid polypeptide reads, in one-letter code: 3,4-dihydroxy-2-butanone 4-phosphate synthase (211 aa).

Residues 37–38 (RE), Asp42, 150–154 (RGGHT), and Glu174 each bind D-ribulose 5-phosphate. Residue Glu38 participates in Mg(2+) binding. His153 lines the Mg(2+) pocket.

It belongs to the DHBP synthase family. In terms of assembly, homodimer. Mg(2+) serves as cofactor. The cofactor is Mn(2+).

The enzyme catalyses D-ribulose 5-phosphate = (2S)-2-hydroxy-3-oxobutyl phosphate + formate + H(+). Its pathway is cofactor biosynthesis; riboflavin biosynthesis; 2-hydroxy-3-oxobutyl phosphate from D-ribulose 5-phosphate: step 1/1. Its function is as follows. Catalyzes the conversion of D-ribulose 5-phosphate to formate and 3,4-dihydroxy-2-butanone 4-phosphate. The polypeptide is 3,4-dihydroxy-2-butanone 4-phosphate synthase (Baumannia cicadellinicola subsp. Homalodisca coagulata).